The chain runs to 276 residues: Formamidopyrimidine-DNA glycosylase (276 aa).

Pro-2 functions as the Schiff-base intermediate with DNA in the catalytic mechanism. Glu-3 serves as the catalytic Proton donor. Lys-60 serves as the catalytic Proton donor; for beta-elimination activity. The DNA site is built by His-93, Arg-112, and Arg-155. An FPG-type zinc finger spans residues 240-274; that stretch reads LVYGRKDEACTKCGAEIIRFVVGGRGTHICPDCQK. The active-site Proton donor; for delta-elimination activity is Arg-264.

The protein belongs to the FPG family. Monomer. Requires Zn(2+) as cofactor.

The enzyme catalyses Hydrolysis of DNA containing ring-opened 7-methylguanine residues, releasing 2,6-diamino-4-hydroxy-5-(N-methyl)formamidopyrimidine.. The catalysed reaction is 2'-deoxyribonucleotide-(2'-deoxyribose 5'-phosphate)-2'-deoxyribonucleotide-DNA = a 3'-end 2'-deoxyribonucleotide-(2,3-dehydro-2,3-deoxyribose 5'-phosphate)-DNA + a 5'-end 5'-phospho-2'-deoxyribonucleoside-DNA + H(+). Involved in base excision repair of DNA damaged by oxidation or by mutagenic agents. Acts as a DNA glycosylase that recognizes and removes damaged bases. Has a preference for oxidized purines, such as 7,8-dihydro-8-oxoguanine (8-oxoG). Has AP (apurinic/apyrimidinic) lyase activity and introduces nicks in the DNA strand. Cleaves the DNA backbone by beta-delta elimination to generate a single-strand break at the site of the removed base with both 3'- and 5'-phosphates. The protein is Formamidopyrimidine-DNA glycosylase of Brevibacillus brevis (strain 47 / JCM 6285 / NBRC 100599).